An 85-amino-acid polypeptide reads, in one-letter code: Small ribosomal subunit protein uS17 (85 aa).

It belongs to the universal ribosomal protein uS17 family. In terms of assembly, part of the 30S ribosomal subunit.

In terms of biological role, one of the primary rRNA binding proteins, it binds specifically to the 5'-end of 16S ribosomal RNA. The sequence is that of Small ribosomal subunit protein uS17 from Ruminiclostridium cellulolyticum (strain ATCC 35319 / DSM 5812 / JCM 6584 / H10) (Clostridium cellulolyticum).